A 550-amino-acid chain; its full sequence is Hydroxylamine reductase (550 aa).

Positions 3, 6, 18, and 25 each coordinate [2Fe-2S] cluster. Histidine 249, glutamate 273, cysteine 317, cysteine 405, cysteine 433, cysteine 458, glutamate 492, and lysine 494 together coordinate hybrid [4Fe-2O-2S] cluster. Cysteine 405 carries the post-translational modification Cysteine persulfide.

It belongs to the HCP family. [2Fe-2S] cluster serves as cofactor. Hybrid [4Fe-2O-2S] cluster is required as a cofactor.

It is found in the cytoplasm. The catalysed reaction is A + NH4(+) + H2O = hydroxylamine + AH2 + H(+). In terms of biological role, catalyzes the reduction of hydroxylamine to form NH(3) and H(2)O. The chain is Hydroxylamine reductase from Escherichia coli O7:K1 (strain IAI39 / ExPEC).